The chain runs to 621 residues: Kelch-like protein 40 (621 aa).

A BTB domain is found at 33–98; it reads LDCVVRVGER…LYTSEIALDE (66 aa). One can recognise a BACK domain in the interval 133–239; the sequence is CLAVFRLGLL…PRAFLETRVE (107 aa). The tract at residues 265–298 is disordered; it reads LTTLRKKKKEKGEQTARAKEANQGTEDTKAEDDE. Over residues 274-284 the composition is skewed to basic and acidic residues; sequence EKGEQTARAKE. Kelch repeat units follow at residues 360–412, 413–462, 463–510, 512–557, and 559–613; these read QVFV…EALN, AIYV…SHMD, LVYV…VHDG, IFVA…SLAG, and LYAL…PVRL.

Belongs to the KLHL40 family. As to quaternary structure, component of the BCR(KLHL40) E3 ubiquitin ligase complex, at least composed of CUL3, KLHL40 and RBX1. Interacts with LMOD3. In terms of tissue distribution, specifically expressed in skeletal muscles in embryonic, neonatal and adults. Expressed in various types of muscles, including extensor digitorum longus, gastrocnemius, soleus, diaphragm, masseter and heart (at protein level). Not detected in brain, liver and lung (at protein level).

The protein resides in the cytoplasm. The protein localises to the myofibril. Its subcellular location is the sarcomere. It localises to the a band. It is found in the i band. Its function is as follows. Substrate-specific adapter of a BCR (BTB-CUL3-RBX1) E3 ubiquitin ligase complex that acts as a key regulator of skeletal muscle development. The BCR(KLHL40) complex acts by mediating ubiquitination and degradation of TFDP1, thereby regulating the activity of the E2F:DP transcription factor complex. Promotes stabilization of LMOD3 by acting as a negative regulator of LMOD3 ubiquitination; the molecular process by which it negatively regulates ubiquitination of LMOD3 is however unclear. In Mus musculus (Mouse), this protein is Kelch-like protein 40.